A 271-amino-acid polypeptide reads, in one-letter code: ATP synthase subunit delta (271 aa).

This sequence belongs to the ATPase delta chain family. As to quaternary structure, F-type ATPases have 2 components, F(1) - the catalytic core - and F(0) - the membrane proton channel. F(1) has five subunits: alpha(3), beta(3), gamma(1), delta(1), epsilon(1). F(0) has three main subunits: a(1), b(2) and c(10-14). The alpha and beta chains form an alternating ring which encloses part of the gamma chain. F(1) is attached to F(0) by a central stalk formed by the gamma and epsilon chains, while a peripheral stalk is formed by the delta and b chains.

Its subcellular location is the cell membrane. F(1)F(0) ATP synthase produces ATP from ADP in the presence of a proton or sodium gradient. F-type ATPases consist of two structural domains, F(1) containing the extramembraneous catalytic core and F(0) containing the membrane proton channel, linked together by a central stalk and a peripheral stalk. During catalysis, ATP synthesis in the catalytic domain of F(1) is coupled via a rotary mechanism of the central stalk subunits to proton translocation. In terms of biological role, this protein is part of the stalk that links CF(0) to CF(1). It either transmits conformational changes from CF(0) to CF(1) or is implicated in proton conduction. The protein is ATP synthase subunit delta of Streptomyces griseus subsp. griseus (strain JCM 4626 / CBS 651.72 / NBRC 13350 / KCC S-0626 / ISP 5235).